A 76-amino-acid chain; its full sequence is Large ribosomal subunit protein bL31 (76 aa).

This sequence belongs to the bacterial ribosomal protein bL31 family. Type A subfamily. Part of the 50S ribosomal subunit.

Functionally, binds the 23S rRNA. This chain is Large ribosomal subunit protein bL31, found in Methylocella silvestris (strain DSM 15510 / CIP 108128 / LMG 27833 / NCIMB 13906 / BL2).